A 178-amino-acid polypeptide reads, in one-letter code: Stage V sporulation protein T (178 aa).

Positions 5–51 constitute a SpoVT-AbrB domain; that stretch reads GIVRRIDDLGRVVIPKEIRRTLRIREGDPLEIFVDRDGEVILKKYSP. Residues 56 to 178 are GAF-like; the sequence is GDFAKEYADA…AGFLARQMEQ (123 aa).

This sequence to B.subtilis AbrB and Abh. In terms of assembly, homotetramer. Two monomers dimerize via their N-terminal swapped-hairpin domains. These dimers further associate into tetramers through helical interactions between their C-terminal GAF-like domains.

Its function is as follows. Transcriptional factor that positively regulates or negatively the expression of a large number of forespore-specific sigma G-dependent genes. May provide a mechanism of feedback control that is important for forespore development. SpoVT levels during spore formation have a major impact on the germination and the resistance of the resultant spores. The sequence is that of Stage V sporulation protein T from Bacillus subtilis (strain 168).